The sequence spans 1172 residues: Lysylphosphatidylglycerol biosynthesis bifunctional protein LysX (1172 aa).

Positions 1–34 (MGLHLTVPGLRRDGRGVQSNSHDTSSKTTADISR) are disordered. A phosphatidylglycerol lysyltransferase region spans residues 1–663 (MGLHLTVPGL…LLHHDGSAPD (663 aa)). Residues 17–31 (VQSNSHDTSSKTTAD) are compositionally biased toward polar residues. Helical transmembrane passes span 80-100 (VPAA…LASV), 122-142 (FPDT…ALTA), 146-166 (IAWL…AAEI), 177-197 (FGEN…VLGY), 214-234 (AVWL…VELF), 272-292 (AIFG…LFLS), and 612-632 (VIPR…LPFS). The segment at 664–1172 (VSGLRQVGLT…TLPFPLAKPH (509 aa)) is lysine--tRNA ligase. The segment at residues 726 to 804 (VSVSGRIMRI…SLIVSGWRLI (79 aa)) is a DNA-binding region (OB). Mg(2+)-binding residues include aspartate 1084 and glutamate 1091.

The protein in the N-terminal section; belongs to the LPG synthetase family. In the C-terminal section; belongs to the class-II aminoacyl-tRNA synthetase family. It depends on Mg(2+) as a cofactor.

The protein resides in the cell membrane. The enzyme catalyses tRNA(Lys) + L-lysine + ATP = L-lysyl-tRNA(Lys) + AMP + diphosphate. It catalyses the reaction L-lysyl-tRNA(Lys) + a 1,2-diacyl-sn-glycero-3-phospho-(1'-sn-glycerol) = a 1,2-diacyl-sn-glycero-3-phospho-1'-(3'-O-L-lysyl)-sn-glycerol + tRNA(Lys). Catalyzes the production of L-lysyl-tRNA(Lys)transfer and the transfer of a lysyl group from L-lysyl-tRNA(Lys) to membrane-bound phosphatidylglycerol (PG), which produces lysylphosphatidylglycerol (LPG), one of the components of the bacterial membrane with a positive net charge. LPG synthesis contributes to the resistance to cationic antimicrobial peptides (CAMPs) and likely protects M.tuberculosis against the CAMPs produced by competiting microorganisms (bacteriocins). In fact, the modification of anionic phosphatidylglycerol with positively charged L-lysine results in repulsion of the peptides. The chain is Lysylphosphatidylglycerol biosynthesis bifunctional protein LysX (lysX) from Mycobacterium bovis (strain BCG / Pasteur 1173P2).